Here is a 237-residue protein sequence, read N- to C-terminus: uncharacterized protein (237 aa).

A divalent metal cation-binding residues include Glu-91, Glu-93, and Asp-122.

This sequence belongs to the FAH family.

This is an uncharacterized protein from Methanocaldococcus jannaschii (strain ATCC 43067 / DSM 2661 / JAL-1 / JCM 10045 / NBRC 100440) (Methanococcus jannaschii).